The chain runs to 476 residues: Glutamyl-tRNA(Gln) amidotransferase subunit A (476 aa).

Catalysis depends on charge relay system residues lysine 69 and serine 144. Serine 168 acts as the Acyl-ester intermediate in catalysis.

The protein belongs to the amidase family. GatA subfamily. As to quaternary structure, heterotrimer of A, B and C subunits.

The enzyme catalyses L-glutamyl-tRNA(Gln) + L-glutamine + ATP + H2O = L-glutaminyl-tRNA(Gln) + L-glutamate + ADP + phosphate + H(+). In terms of biological role, allows the formation of correctly charged Gln-tRNA(Gln) through the transamidation of misacylated Glu-tRNA(Gln) in organisms which lack glutaminyl-tRNA synthetase. The reaction takes place in the presence of glutamine and ATP through an activated gamma-phospho-Glu-tRNA(Gln). This is Glutamyl-tRNA(Gln) amidotransferase subunit A from Sulfolobus acidocaldarius (strain ATCC 33909 / DSM 639 / JCM 8929 / NBRC 15157 / NCIMB 11770).